The sequence spans 278 residues: MNIIDAIINLANNPVVGVESHSQSNNRANQAGDALEEYVKDLFSGSFNLNETQRIARHAKVFSYLGNNSNPPDAMLRNGDAIEVKKIESKDSALALNSSHPKSKLSVDDSMLTKACKDAEKWEEKDIIYIVGVVDKKKNLKHLAMVYGIDYCADAECYLKIKNQIKEGIGNIGGIQFAETKELGRVNRIDPLNITYLRVRGMWGIENPWFVFNYIYQRNMEKSFNFMAIINEDKWNSFNNTDKLLAIQDSKLAISDIKIKNPNNPARLRNAKLITYHL.

This sequence belongs to the NgoPII type II restriction endonuclease family.

The enzyme catalyses Endonucleolytic cleavage of DNA to give specific double-stranded fragments with terminal 5'-phosphates.. In terms of biological role, a P subtype restriction enzyme that recognizes the double-stranded sequence 5'-GGCC-3' and cleaves after G-2. The chain is Type II restriction enzyme NgoPII (ngoPIIR) from Neisseria gonorrhoeae.